We begin with the raw amino-acid sequence, 241 residues long: NAD(P)H-quinone oxidoreductase subunit K (241 aa).

[4Fe-4S] cluster is bound by residues cysteine 60, cysteine 61, cysteine 125, and cysteine 156. The segment at 220 to 241 (SSQKEKITELPEKTEITNTEKD) is disordered. A compositionally biased stretch (basic and acidic residues) spans 222–241 (QKEKITELPEKTEITNTEKD).

Belongs to the complex I 20 kDa subunit family. As to quaternary structure, NDH-1 can be composed of about 15 different subunits; different subcomplexes with different compositions have been identified which probably have different functions. The cofactor is [4Fe-4S] cluster.

It localises to the cellular thylakoid membrane. It carries out the reaction a plastoquinone + NADH + (n+1) H(+)(in) = a plastoquinol + NAD(+) + n H(+)(out). It catalyses the reaction a plastoquinone + NADPH + (n+1) H(+)(in) = a plastoquinol + NADP(+) + n H(+)(out). Its function is as follows. NDH-1 shuttles electrons from an unknown electron donor, via FMN and iron-sulfur (Fe-S) centers, to quinones in the respiratory and/or the photosynthetic chain. The immediate electron acceptor for the enzyme in this species is believed to be plastoquinone. Couples the redox reaction to proton translocation, and thus conserves the redox energy in a proton gradient. Cyanobacterial NDH-1 also plays a role in inorganic carbon-concentration. In Prochlorococcus marinus (strain MIT 9215), this protein is NAD(P)H-quinone oxidoreductase subunit K.